The chain runs to 97 residues: MKPTTLLLIFTFFAMPGIVYAESPFSSLQSAKEKTTVLQDLRKICTPHASLSDEAWEKLMLSDENNKQHIREAIVAMERNNQSNYWEALGKVECPDM.

This is an uncharacterized protein from Shigella flexneri.